We begin with the raw amino-acid sequence, 244 residues long: ATP synthase subunit O, mitochondrial (244 aa).

The N-terminal 45 residues, 1-45 (MAMTGRARSMGFSILQKALSSAQRSNAHRSILCPTLSNSELLRNY), are a transit peptide targeting the mitochondrion.

Belongs to the ATPase delta chain family. In terms of assembly, F-type ATPases have 2 components, CF(1) - the catalytic core - and CF(0) - the membrane proton channel. CF(1) has five subunits: alpha(3), beta(3), gamma(1), delta(1), epsilon(1). CF(0) has three main subunits: a, b and c.

It localises to the mitochondrion. The protein localises to the mitochondrion inner membrane. Its function is as follows. Mitochondrial membrane ATP synthase (F(1)F(0) ATP synthase or Complex V) produces ATP from ADP in the presence of a proton gradient across the membrane which is generated by electron transport complexes of the respiratory chain. F-type ATPases consist of two structural domains, F(1) - containing the extramembraneous catalytic core and F(0) - containing the membrane proton channel, linked together by a central stalk and a peripheral stalk. During catalysis, ATP synthesis in the catalytic domain of F(1) is coupled via a rotary mechanism of the central stalk subunits to proton translocation. Part of the complex F(0) domain and the peripheric stalk, which acts as a stator to hold the catalytic alpha(3)beta(3) subcomplex and subunit a/ATP6 static relative to the rotary elements. The sequence is that of ATP synthase subunit O, mitochondrial from Ipomoea batatas (Sweet potato).